A 171-amino-acid polypeptide reads, in one-letter code: Envelope protein UL128 (171 aa).

Belongs to the HHV-5 UL128 protein family. As to quaternary structure, forms the envelope pentamer complex (PC) composed of gH, gL, UL128, UL130, and UL131A. The pentamer interacts with host NRP2.

It is found in the virion membrane. Functionally, plays a role in viral entry into host cells. Forms a pentameric complex at the surface of the viral envelope together with gH, gL, UL130 and UL131. This complex is required for entry in epithelial, endothelial and myeloid host cells. Mechanistically, engages host receptor(s) including neurophilin 2/NRP2 to mediate infection. Additionally, monomeric UL128 may interfere with certain inflammatory cytokines to increase infection and dissemination by blocking monocytes migration. The polypeptide is Envelope protein UL128 (UL128) (Human cytomegalovirus (strain Merlin) (HHV-5)).